We begin with the raw amino-acid sequence, 2150 residues long: A disintegrin and metalloproteinase with thrombospondin motifs gon-1 (2150 aa).

An N-terminal signal peptide occupies residues 1 to 28 (MRSIGGSFHLLQPVVAALILLVVCLVYA). Positions 29–273 (LQSGSGTISE…VIERKARSRR (245 aa)) are excised as a propeptide. N-linked (GlcNAc...) asparagine glycosylation is found at Asn-134, Asn-213, Asn-243, and Asn-248. The 214-residue stretch at 280 to 493 (HYVEVLVVAD…GQTQCLFDQP (214 aa)) folds into the Peptidase M12B domain. 2 disulfide bridges follow: Cys-402–Cys-488 and Cys-440–Cys-470. His-424 contacts Zn(2+). Glu-425 is an active-site residue. 2 residues coordinate Zn(2+): His-428 and His-434. The Disintegrin domain maps to 503-587 (FVRDEPGKKY…RLAPESLTKI (85 aa)). Residues 588 to 643 (DGQWGDWRSWGECSRTCGGGVQKGLRDCDSPKPRNGGKYCVGQRERYRSCNTQECP) enclose the TSP type-1 1 domain. 3 disulfide bridges follow: Cys-600-Cys-637, Cys-604-Cys-642, and Cys-615-Cys-627. A glycan (N-linked (GlcNAc...) asparagine) is linked at Asn-842. 11 consecutive TSP type-1 domains span residues 943 to 1003 (CSTR…IDCS), 1004 to 1057 (GRKW…RECN), 1060 to 1115 (PCPR…HACT), 1116 to 1165 (WWQF…KPCH), 1168 to 1227 (SCPK…GTCP), 1228 to 1277 (FWRN…QTCH), 1280 to 1339 (PCTS…DTCD), 1352 to 1409 (PPIR…RDCS), 1410 to 1469 (YWKM…EPCP), 1474 to 1524 (HIGS…ELCP), and 1527 to 1585 (TNNS…PPCR). 2 N-linked (GlcNAc...) asparagine glycosylation sites follow: Asn-1139 and Asn-1199. N-linked (GlcNAc...) asparagine glycosylation is found at Asn-1370 and Asn-1432. Residues Asn-1528, Asn-1590, Asn-1606, and Asn-1654 are each glycosylated (N-linked (GlcNAc...) asparagine). The tract at residues 1590 to 1614 (NKTSSASMTSLSSSNSNTTSSASAS) is disordered. Residues 1592–1614 (TSSASMTSLSSSNSNTTSSASAS) show a composition bias toward low complexity. TSP type-1 domains lie at 1621-1675 (PVVS…VRCR), 1678-1736 (HCPR…VACP), 1737-1793 (AYRW…DTSN), 1794-1866 (CPYE…NPCD), and 1867-1924 (SEFK…RNCL). 6 cysteine pairs are disulfide-bonded: Cys-1679–Cys-1718, Cys-1690–Cys-1694, Cys-1690–Cys-1730, Cys-1694–Cys-1735, Cys-1705–Cys-1718, and Cys-1730–Cys-1735. N-linked (GlcNAc...) asparagine glycosylation is found at Asn-1828 and Asn-1855. The GON domain occupies 1924 to 2123 (LPSTCQELKS…RYKGLIFEVN (200 aa)). N-linked (GlcNAc...) asparagine glycosylation is found at Asn-1942, Asn-1960, and Asn-1997.

The cofactor is Zn(2+). Expressed by the gonadal distal tip cells (DTCs). Expressed in muscles, including body wall, vulval and anal depressor muscles. Expressed in motor neurons and in ASI and ASJ neurons.

Its subcellular location is the secreted. The protein resides in the extracellular space. The protein localises to the extracellular matrix. It localises to the basement membrane. It is found in the endoplasmic reticulum. Its subcellular location is the golgi apparatus. Secreted metalloprotease required for distal tip cell (DTC) migration along the body wall basement membranes, a key step that promotes gonad morphogenesis. Probably acts by remodeling the basement membrane during cell migration. Required to restrict presynaptic growth at the neuromuscular junctions (NMJ) in late larval stage and in adult motor neurons, probably by controlling collagen IV emb-9 degradation, a component of the synapse basement membrane. Also involved in the organization of adult muscle morphology. Has a protease-independent function in promoting the transport from the endoplasmic reticulum to the Golgi apparatus of a variety of secretory cargos. Required for the secretion of insulin-like peptide ins-7, daf-28 and ins-18 and TGF beta-like protein daf-7. In peripheral tissues, negatively regulates insulin-mediated daf-16 translocation and thereby negatively regulates lifespan and dauer formation. This is A disintegrin and metalloproteinase with thrombospondin motifs gon-1 from Caenorhabditis elegans.